The following is a 577-amino-acid chain: Beta-fructofuranosidase, insoluble isoenzyme 1 (577 aa).

The first 22 residues, 1–22 (MGTRLLALAPWLLLLLLQLAGA), serve as a signal peptide directing secretion. Asp-63 is an active-site residue. N-linked (GlcNAc...) asparagine glycans are attached at residues Asn-158, Asn-183, and Asn-333.

This sequence belongs to the glycosyl hydrolase 32 family.

The protein localises to the secreted. It localises to the extracellular space. It is found in the apoplast. Its subcellular location is the cell wall. The enzyme catalyses Hydrolysis of terminal non-reducing beta-D-fructofuranoside residues in beta-D-fructofuranosides.. In terms of biological role, may play a role in sucrose partitioning during seed development and in stress response. The protein is Beta-fructofuranosidase, insoluble isoenzyme 1 (CIN1) of Oryza sativa subsp. indica (Rice).